The sequence spans 445 residues: MQENYKAKAYDILKNLNIEEGDLIEIKKGDLRIRGVLLPSYSKDERIFVIKLDNGYNIGISIDNISEIKLITKNSSKAQESERKEVSRNGAKSEIKIISTGGTIVSKVEYETGAVRPALTTEEIVQFLPEINEIAKVDAEVLFSILSENMKPEYWVKIAESVKKAFDEGNTGVVIAHGTDTMAYTASALAFSLRSLQGPVVLVGSQRSSDRPSSDSAINLLSAVTTAKYAPFGEVVVNMHADSSDTYALVHRGVKVRKMHSSRRDAFQSVNDKPLAKVLWKERKLVMLDKSYMSKKGETTLDAKFDNRAFLLYYYPGLDRDFLEHILTNTKIRGLIIAGTGLGHTSSDYVELFRKATKDGIFIGMTTQCLFGRVNMNVYTTGRQLLDAGVTPLEDMLPEVALVKLMWVLAHEQDLEKIRSLMISNLVGEINPRHTLDLFPRWSYE.

Residues 93–425 form the Asparaginase/glutaminase domain; that stretch reads SEIKIISTGG…EKIRSLMISN (333 aa). Active-site residues include Thr103, Thr179, Asp180, and Lys258.

It belongs to the asparaginase 1 family. GatD subfamily. In terms of assembly, heterodimer of GatD and GatE.

The catalysed reaction is L-glutamyl-tRNA(Gln) + L-glutamine + ATP + H2O = L-glutaminyl-tRNA(Gln) + L-glutamate + ADP + phosphate + H(+). In terms of biological role, allows the formation of correctly charged Gln-tRNA(Gln) through the transamidation of misacylated Glu-tRNA(Gln) in organisms which lack glutaminyl-tRNA synthetase. The reaction takes place in the presence of glutamine and ATP through an activated gamma-phospho-Glu-tRNA(Gln). The GatDE system is specific for glutamate and does not act on aspartate. The sequence is that of Glutamyl-tRNA(Gln) amidotransferase subunit D from Saccharolobus islandicus (strain M.16.27) (Sulfolobus islandicus).